We begin with the raw amino-acid sequence, 260 residues long: Circadian clock-controlled protein daywake (260 aa).

The signal sequence occupies residues 1 to 25; that stretch reads MQLTSASVCLLWMGLLSWVSHRIDA.

This sequence belongs to the TO family.

Component of the circadian clock or downstream effector of clock function. Required for suppressing daytime sleep (siesta) under ambient environmental temperatures. Part of a heat avoidance mechanism that modulates daytime sleep behavior under different environmental temperatures to minimize the risk of heat exposure. Under cooler ambient temperatures, suppresses daytime sleep (siesta) and thus allows for longer periods of daytime activity. The chain is Circadian clock-controlled protein daywake from Drosophila yakuba (Fruit fly).